The following is a 468-amino-acid chain: Argininosuccinate lyase (468 aa).

The protein belongs to the lyase 1 family. Argininosuccinate lyase subfamily.

It localises to the cytoplasm. It carries out the reaction 2-(N(omega)-L-arginino)succinate = fumarate + L-arginine. It participates in amino-acid biosynthesis; L-arginine biosynthesis; L-arginine from L-ornithine and carbamoyl phosphate: step 3/3. The protein is Argininosuccinate lyase of Alkalilimnicola ehrlichii (strain ATCC BAA-1101 / DSM 17681 / MLHE-1).